The primary structure comprises 106 residues: Iron-sulfur cluster assembly protein CyaY (106 aa).

It belongs to the frataxin family.

In terms of biological role, involved in iron-sulfur (Fe-S) cluster assembly. May act as a regulator of Fe-S biogenesis. The polypeptide is Iron-sulfur cluster assembly protein CyaY (Salmonella heidelberg (strain SL476)).